The sequence spans 471 residues: Putative multidrug resistance protein MdtD (471 aa).

13 helical membrane-spanning segments follow: residues 12–32, 49–69, 77–97, 106–126, 138–158, 165–185, 195–215, 220–240, 263–283, 286–306, 342–362, 393–413, and 431–451; these read LWIV…VNTA, MIIV…GWLA, IFFT…QAST, VLQG…VMKI, FVTL…GVLV, WIFL…LCLM, FDLS…LALD, LGIS…ALLL, FSLG…LPFM, VFLQ…MIPM, LLFM…VLFL, LLSM…GLLL, and VFLY…LIFS.

It belongs to the major facilitator superfamily. TCR/Tet family.

It localises to the cell inner membrane. This Klebsiella pneumoniae (strain 342) protein is Putative multidrug resistance protein MdtD.